Here is a 467-residue protein sequence, read N- to C-terminus: 6-phospho-beta-galactosidase (467 aa).

D-galactose 6-phosphate is bound by residues glutamine 19, histidine 116, asparagine 159, glutamate 160, and asparagine 297. Glutamate 160 serves as the catalytic Proton donor. Catalysis depends on glutamate 375, which acts as the Nucleophile. Positions 428, 429, 435, and 437 each coordinate D-galactose 6-phosphate.

This sequence belongs to the glycosyl hydrolase 1 family.

The catalysed reaction is a 6-phospho-beta-D-galactoside + H2O = D-galactose 6-phosphate + an alcohol. The protein operates within carbohydrate metabolism; lactose degradation; D-galactose 6-phosphate and beta-D-glucose from lactose 6-phosphate: step 1/1. Its activity is regulated as follows. Inhibited by both galactose-6-phosphate and ATP. In Leptotrichia buccalis (strain ATCC 14201 / DSM 1135 / JCM 12969 / NCTC 10249 / C-1013-b), this protein is 6-phospho-beta-galactosidase.